We begin with the raw amino-acid sequence, 906 residues long: Probable RNA-directed DNA polymerase from transposon BS (906 aa).

Residues 482-758 (AILRVQFFPK…SQAKYLGITL (277 aa)) form the Reverse transcriptase domain.

It depends on Mg(2+) as a cofactor. Mn(2+) is required as a cofactor.

The catalysed reaction is DNA(n) + a 2'-deoxyribonucleoside 5'-triphosphate = DNA(n+1) + diphosphate. The polypeptide is Probable RNA-directed DNA polymerase from transposon BS (Drosophila melanogaster (Fruit fly)).